The primary structure comprises 1077 residues: Carbamoyl phosphate synthase large chain (1077 aa).

The interval 1–403 (MPKRTDIQSI…SLHKALRGLE (403 aa)) is carboxyphosphate synthetic domain. Arg-129, Arg-169, Gly-175, Gly-176, Glu-208, Leu-210, Glu-215, Gly-241, Ile-242, His-243, Gln-285, and Glu-299 together coordinate ATP. An ATP-grasp 1 domain is found at 133-328 (DKAMKSIGLE…IAKIAAKLAV (196 aa)). Residues Gln-285, Glu-299, and Asn-301 each contribute to the Mg(2+) site. Gln-285, Glu-299, and Asn-301 together coordinate Mn(2+). Residues 404-553 (VGATGFDEMV…YSSYDEECEA (150 aa)) are oligomerization domain. Residues 554–935 (NPTDKDKIMV…AYAKAELGCG (382 aa)) are carbamoyl phosphate synthetic domain. The ATP-grasp 2 domain occupies 678–869 (QAAVERLGLL…LAKIAARVMA (192 aa)). 10 residues coordinate ATP: Arg-714, Arg-753, Leu-755, Glu-760, Gly-785, Val-786, His-787, Ser-788, Gln-828, and Glu-840. Positions 828, 840, and 842 each coordinate Mg(2+). Mn(2+) is bound by residues Gln-828, Glu-840, and Asn-842. The 142-residue stretch at 936–1077 (SVYPEGGRAL…HAKVKASLEA (142 aa)) folds into the MGS-like domain. Residues 936–1077 (SVYPEGGRAL…HAKVKASLEA (142 aa)) form an allosteric domain region.

It belongs to the CarB family. In terms of assembly, composed of two chains; the small (or glutamine) chain promotes the hydrolysis of glutamine to ammonia, which is used by the large (or ammonia) chain to synthesize carbamoyl phosphate. Tetramer of heterodimers (alpha,beta)4. Mg(2+) serves as cofactor. The cofactor is Mn(2+).

It catalyses the reaction hydrogencarbonate + L-glutamine + 2 ATP + H2O = carbamoyl phosphate + L-glutamate + 2 ADP + phosphate + 2 H(+). The enzyme catalyses hydrogencarbonate + NH4(+) + 2 ATP = carbamoyl phosphate + 2 ADP + phosphate + 2 H(+). It functions in the pathway amino-acid biosynthesis; L-arginine biosynthesis; carbamoyl phosphate from bicarbonate: step 1/1. The protein operates within pyrimidine metabolism; UMP biosynthesis via de novo pathway; (S)-dihydroorotate from bicarbonate: step 1/3. In terms of biological role, large subunit of the glutamine-dependent carbamoyl phosphate synthetase (CPSase). CPSase catalyzes the formation of carbamoyl phosphate from the ammonia moiety of glutamine, carbonate, and phosphate donated by ATP, constituting the first step of 2 biosynthetic pathways, one leading to arginine and/or urea and the other to pyrimidine nucleotides. The large subunit (synthetase) binds the substrates ammonia (free or transferred from glutamine from the small subunit), hydrogencarbonate and ATP and carries out an ATP-coupled ligase reaction, activating hydrogencarbonate by forming carboxy phosphate which reacts with ammonia to form carbamoyl phosphate. This Vibrio parahaemolyticus serotype O3:K6 (strain RIMD 2210633) protein is Carbamoyl phosphate synthase large chain.